The sequence spans 130 residues: Small ribosomal subunit protein uS9 (130 aa).

This sequence belongs to the universal ribosomal protein uS9 family.

This Yersinia pseudotuberculosis serotype O:1b (strain IP 31758) protein is Small ribosomal subunit protein uS9.